A 664-amino-acid polypeptide reads, in one-letter code: DNA ligase (664 aa).

NAD(+)-binding positions include 32–36 (DKEYD) and 80–81 (SL). Lysine 122 acts as the N6-AMP-lysine intermediate in catalysis. Residues arginine 144, glutamate 178, and lysine 314 each contribute to the NAD(+) site. Positions 407, 410, 423, and 429 each coordinate Zn(2+). Residues 587–664 (IDENPFMGKT…NEEEFSNKIK (78 aa)) enclose the BRCT domain.

This sequence belongs to the NAD-dependent DNA ligase family. LigA subfamily. It depends on Mg(2+) as a cofactor. The cofactor is Mn(2+).

The catalysed reaction is NAD(+) + (deoxyribonucleotide)n-3'-hydroxyl + 5'-phospho-(deoxyribonucleotide)m = (deoxyribonucleotide)n+m + AMP + beta-nicotinamide D-nucleotide.. DNA ligase that catalyzes the formation of phosphodiester linkages between 5'-phosphoryl and 3'-hydroxyl groups in double-stranded DNA using NAD as a coenzyme and as the energy source for the reaction. It is essential for DNA replication and repair of damaged DNA. The sequence is that of DNA ligase from Clostridium botulinum (strain 657 / Type Ba4).